A 286-amino-acid chain; its full sequence is Lipoyl synthase (286 aa).

C38, C43, C49, C64, C68, C71, and S276 together coordinate [4Fe-4S] cluster. The Radical SAM core domain maps to 50–265; sequence WEQGVATFMI…ENIALDMGFL (216 aa).

This sequence belongs to the radical SAM superfamily. Lipoyl synthase family. It depends on [4Fe-4S] cluster as a cofactor.

It localises to the cytoplasm. It catalyses the reaction [[Fe-S] cluster scaffold protein carrying a second [4Fe-4S](2+) cluster] + N(6)-octanoyl-L-lysyl-[protein] + 2 oxidized [2Fe-2S]-[ferredoxin] + 2 S-adenosyl-L-methionine + 4 H(+) = [[Fe-S] cluster scaffold protein] + N(6)-[(R)-dihydrolipoyl]-L-lysyl-[protein] + 4 Fe(3+) + 2 hydrogen sulfide + 2 5'-deoxyadenosine + 2 L-methionine + 2 reduced [2Fe-2S]-[ferredoxin]. It participates in protein modification; protein lipoylation via endogenous pathway; protein N(6)-(lipoyl)lysine from octanoyl-[acyl-carrier-protein]: step 2/2. Its function is as follows. Catalyzes the radical-mediated insertion of two sulfur atoms into the C-6 and C-8 positions of the octanoyl moiety bound to the lipoyl domains of lipoate-dependent enzymes, thereby converting the octanoylated domains into lipoylated derivatives. This Karelsulcia muelleri (strain GWSS) (Sulcia muelleri) protein is Lipoyl synthase.